Consider the following 341-residue polypeptide: GTPase Obg (341 aa).

The 159-residue stretch at 1–159 (MKFLDQAKVY…RTLWLRLKLI (159 aa)) folds into the Obg domain. In terms of domain architecture, OBG-type G spans 160-327 (ADAGLIGLPN…MLRAGAHMIE (168 aa)). GTP is bound by residues 166 to 173 (GLPNAGKS), 191 to 195 (FTTLY), 212 to 215 (DIPG), 279 to 282 (SQID), and 308 to 310 (SAV). Mg(2+)-binding residues include serine 173 and threonine 193.

The protein belongs to the TRAFAC class OBG-HflX-like GTPase superfamily. OBG GTPase family. Monomer. It depends on Mg(2+) as a cofactor.

Its subcellular location is the cytoplasm. Its function is as follows. An essential GTPase which binds GTP, GDP and possibly (p)ppGpp with moderate affinity, with high nucleotide exchange rates and a fairly low GTP hydrolysis rate. Plays a role in control of the cell cycle, stress response, ribosome biogenesis and in those bacteria that undergo differentiation, in morphogenesis control. In Bartonella quintana (strain Toulouse) (Rochalimaea quintana), this protein is GTPase Obg.